A 225-amino-acid polypeptide reads, in one-letter code: Ribosomal RNA small subunit methyltransferase G (225 aa).

S-adenosyl-L-methionine contacts are provided by residues G96, F101, 146-147 (AE), and R160.

This sequence belongs to the methyltransferase superfamily. RNA methyltransferase RsmG family.

The protein localises to the cytoplasm. Its function is as follows. Specifically methylates the N7 position of a guanine in 16S rRNA. This Mycoplasma mobile (strain ATCC 43663 / 163K / NCTC 11711) (Mesomycoplasma mobile) protein is Ribosomal RNA small subunit methyltransferase G.